Reading from the N-terminus, the 305-residue chain is UDP-3-O-acyl-N-acetylglucosamine deacetylase (305 aa).

His79, His238, and Asp242 together coordinate Zn(2+). The active-site Proton donor is the His265.

The protein belongs to the LpxC family. Requires Zn(2+) as cofactor.

It catalyses the reaction a UDP-3-O-[(3R)-3-hydroxyacyl]-N-acetyl-alpha-D-glucosamine + H2O = a UDP-3-O-[(3R)-3-hydroxyacyl]-alpha-D-glucosamine + acetate. Its pathway is glycolipid biosynthesis; lipid IV(A) biosynthesis; lipid IV(A) from (3R)-3-hydroxytetradecanoyl-[acyl-carrier-protein] and UDP-N-acetyl-alpha-D-glucosamine: step 2/6. In terms of biological role, catalyzes the hydrolysis of UDP-3-O-myristoyl-N-acetylglucosamine to form UDP-3-O-myristoylglucosamine and acetate, the committed step in lipid A biosynthesis. The chain is UDP-3-O-acyl-N-acetylglucosamine deacetylase from Shigella boydii serotype 18 (strain CDC 3083-94 / BS512).